We begin with the raw amino-acid sequence, 553 residues long: 5'-nucleotidase domain-containing protein 2 (553 aa).

The tract at residues 26 to 51 (SSSPSCPGCGPPGPGAHCPSTPRSAP) is disordered. The Nucleophile role is filled by Asp-106. Positions 106, 108, and 391 each coordinate Mg(2+). The Proton donor role is filled by Asp-108.

It belongs to the 5'(3')-deoxyribonucleotidase family. As to quaternary structure, interacts with tyrosine 3-monooxygenase TH; the interaction results in reduced phosphorylation and decreased catalytic activity of TH. As to expression, expressed in eye iridocorneal angle.

The protein resides in the cytoplasm. Functionally, promotes dephosphorylation of tyrosine 3-monooxygenase TH which decreases TH catalytic activity and leads to reduced synthesis of catecholamines including dopamine, noradrenaline and adrenaline. The exact mechanism of activity is unknown but may act as a phosphatase or promote the activity of phosphatases or may inhibit phosphorylation by acting as a barrier to interfere with protein kinase access. The polypeptide is 5'-nucleotidase domain-containing protein 2 (Nt5dc2) (Rattus norvegicus (Rat)).